Here is a 213-residue protein sequence, read N- to C-terminus: Uridine kinase (213 aa).

An ATP-binding site is contributed by 13–20 (GGSCSGKT).

It belongs to the uridine kinase family.

It localises to the cytoplasm. The enzyme catalyses uridine + ATP = UMP + ADP + H(+). It carries out the reaction cytidine + ATP = CMP + ADP + H(+). Its pathway is pyrimidine metabolism; CTP biosynthesis via salvage pathway; CTP from cytidine: step 1/3. It functions in the pathway pyrimidine metabolism; UMP biosynthesis via salvage pathway; UMP from uridine: step 1/1. This Mycoplasma pneumoniae (strain ATCC 29342 / M129 / Subtype 1) (Mycoplasmoides pneumoniae) protein is Uridine kinase (udk).